We begin with the raw amino-acid sequence, 421 residues long: Cytochrome c biogenesis protein Ccs1 (421 aa).

Helical transmembrane passes span 12 to 32 (LRFA…GTVI), 71 to 91 (TWWF…CTLL), and 157 to 177 (IAPI…IIGS).

Belongs to the Ccs1/CcsB family. May interact with CcsA.

It is found in the plastid. The protein localises to the chloroplast thylakoid membrane. Required during biogenesis of c-type cytochromes (cytochrome c6 and cytochrome f) at the step of heme attachment. This chain is Cytochrome c biogenesis protein Ccs1, found in Thalassiosira pseudonana (Marine diatom).